A 154-amino-acid chain; its full sequence is Protein FasC (154 aa).

Belongs to the periplasmic pilus chaperone family.

Functionally, could be required for the biogenesis of a putative fimbria. The sequence is that of Protein FasC (fasC) from Escherichia coli.